A 645-amino-acid chain; its full sequence is uncharacterized protein (645 aa).

This sequence belongs to the mycobacterial PPE family.

This is an uncharacterized protein from Mycobacterium tuberculosis (strain CDC 1551 / Oshkosh).